Consider the following 171-residue polypeptide: Adenine phosphoribosyltransferase (171 aa).

The protein belongs to the purine/pyrimidine phosphoribosyltransferase family. As to quaternary structure, homodimer.

It is found in the cytoplasm. The enzyme catalyses AMP + diphosphate = 5-phospho-alpha-D-ribose 1-diphosphate + adenine. The protein operates within purine metabolism; AMP biosynthesis via salvage pathway; AMP from adenine: step 1/1. Functionally, catalyzes a salvage reaction resulting in the formation of AMP, that is energically less costly than de novo synthesis. The protein is Adenine phosphoribosyltransferase of Mycoplasmopsis fermentans (strain ATCC 19989 / NBRC 14854 / NCTC 10117 / PG18) (Mycoplasma fermentans).